A 96-amino-acid polypeptide reads, in one-letter code: Uteroglobin (96 aa).

The signal sequence occupies residues Met-1–Ser-21.

The protein belongs to the secretoglobin family. As to quaternary structure, antiparallel homodimer; disulfide-linked. Interaction with LMBR1L is controversial.

It localises to the secreted. In terms of biological role, binds phosphatidylcholine, phosphatidylinositol, polychlorinated biphenyls (PCB) and weakly progesterone, potent inhibitor of phospholipase A2. In Mesocricetus auratus (Golden hamster), this protein is Uteroglobin (SCGB1A1).